A 440-amino-acid polypeptide reads, in one-letter code: Ribulose bisphosphate carboxylase large chain (440 aa).

K3 bears the N6,N6,N6-trimethyllysine mark. Substrate is bound by residues N112 and T162. K164 functions as the Proton acceptor in the catalytic mechanism. K166 provides a ligand contact to substrate. 3 residues coordinate Mg(2+): K190, D192, and E193. K190 is subject to N6-carboxylysine. The Proton acceptor role is filled by H283. 3 residues coordinate substrate: R284, H316, and S368.

This sequence belongs to the RuBisCO large chain family. Type I subfamily. As to quaternary structure, heterohexadecamer of 8 large chains and 8 small chains; disulfide-linked. The disulfide link is formed within the large subunit homodimers. The cofactor is Mg(2+). The disulfide bond which can form in the large chain dimeric partners within the hexadecamer appears to be associated with oxidative stress and protein turnover.

It is found in the plastid. The protein resides in the chloroplast. The enzyme catalyses 2 (2R)-3-phosphoglycerate + 2 H(+) = D-ribulose 1,5-bisphosphate + CO2 + H2O. The catalysed reaction is D-ribulose 1,5-bisphosphate + O2 = 2-phosphoglycolate + (2R)-3-phosphoglycerate + 2 H(+). In terms of biological role, ruBisCO catalyzes two reactions: the carboxylation of D-ribulose 1,5-bisphosphate, the primary event in carbon dioxide fixation, as well as the oxidative fragmentation of the pentose substrate in the photorespiration process. Both reactions occur simultaneously and in competition at the same active site. This is Ribulose bisphosphate carboxylase large chain from Bambusa multiplex (Hedge bamboo).